Here is a 72-residue protein sequence, read N- to C-terminus: Translation initiation factor IF-1 (72 aa).

The S1-like domain occupies 1 to 72 (MSKEEVLEFS…TKGRITYRYK (72 aa)).

This sequence belongs to the IF-1 family. Component of the 30S ribosomal translation pre-initiation complex which assembles on the 30S ribosome in the order IF-2 and IF-3, IF-1 and N-formylmethionyl-tRNA(fMet); mRNA recruitment can occur at any time during PIC assembly.

The protein localises to the cytoplasm. In terms of biological role, one of the essential components for the initiation of protein synthesis. Stabilizes the binding of IF-2 and IF-3 on the 30S subunit to which N-formylmethionyl-tRNA(fMet) subsequently binds. Helps modulate mRNA selection, yielding the 30S pre-initiation complex (PIC). Upon addition of the 50S ribosomal subunit IF-1, IF-2 and IF-3 are released leaving the mature 70S translation initiation complex. In Bartonella bacilliformis (strain ATCC 35685 / KC583 / Herrer 020/F12,63), this protein is Translation initiation factor IF-1.